A 689-amino-acid chain; its full sequence is DNA ligase (689 aa).

Residues 40–44 (DSEYD), 89–90 (SL), and Glu-121 contribute to the NAD(+) site. The active-site N6-AMP-lysine intermediate is the Lys-123. NAD(+) contacts are provided by Arg-144, Glu-179, Lys-295, and Lys-319. Zn(2+) is bound by residues Cys-413, Cys-416, Cys-431, and Cys-437. The 80-residue stretch at 610-689 (REQSSLTDKI…EEWLTLIKNV (80 aa)) folds into the BRCT domain.

Belongs to the NAD-dependent DNA ligase family. LigA subfamily. The cofactor is Mg(2+). It depends on Mn(2+) as a cofactor.

The catalysed reaction is NAD(+) + (deoxyribonucleotide)n-3'-hydroxyl + 5'-phospho-(deoxyribonucleotide)m = (deoxyribonucleotide)n+m + AMP + beta-nicotinamide D-nucleotide.. Its function is as follows. DNA ligase that catalyzes the formation of phosphodiester linkages between 5'-phosphoryl and 3'-hydroxyl groups in double-stranded DNA using NAD as a coenzyme and as the energy source for the reaction. It is essential for DNA replication and repair of damaged DNA. In Rickettsia africae (strain ESF-5), this protein is DNA ligase.